Reading from the N-terminus, the 179-residue chain is Bifunctional protein PyrR (179 aa).

The short motif at 100–112 is the PRPP-binding element; the sequence is VILVDDVLFTGRT.

It belongs to the purine/pyrimidine phosphoribosyltransferase family. PyrR subfamily. As to quaternary structure, homodimer and homohexamer; in equilibrium.

It carries out the reaction UMP + diphosphate = 5-phospho-alpha-D-ribose 1-diphosphate + uracil. Its function is as follows. Regulates transcriptional attenuation of the pyrimidine nucleotide (pyr) operon by binding in a uridine-dependent manner to specific sites on pyr mRNA. This disrupts an antiterminator hairpin in the RNA and favors formation of a downstream transcription terminator, leading to a reduced expression of downstream genes. Functionally, also displays a weak uracil phosphoribosyltransferase activity which is not physiologically significant. This is Bifunctional protein PyrR from Geobacillus sp. (strain WCH70).